Consider the following 133-residue polypeptide: Holo-[acyl-carrier-protein] synthase (133 aa).

Mg(2+)-binding residues include aspartate 8 and glutamate 64.

This sequence belongs to the P-Pant transferase superfamily. AcpS family. Mg(2+) is required as a cofactor.

It localises to the cytoplasm. The enzyme catalyses apo-[ACP] + CoA = holo-[ACP] + adenosine 3',5'-bisphosphate + H(+). Its function is as follows. Transfers the 4'-phosphopantetheine moiety from coenzyme A to a Ser of acyl-carrier-protein. This Shewanella loihica (strain ATCC BAA-1088 / PV-4) protein is Holo-[acyl-carrier-protein] synthase.